We begin with the raw amino-acid sequence, 683 residues long: U4/U6 small nuclear ribonucleoprotein Prp3 (683 aa).

Positions 1 to 87 (MALSKRELDE…HSKSSSDRSR (87 aa)) constitute a PWI domain. Positions 73-107 (GRSSRHSKSSSDRSRKRELKEVFGDDSEISKESSG) are enriched in basic and acidic residues. Residues 73 to 135 (GRSSRHSKSS…IPGPPSESPG (63 aa)) are disordered. Lys139 is covalently cross-linked (Glycyl lysine isopeptide (Lys-Gly) (interchain with G-Cter in SUMO2)). The segment at 153–183 (IEERKKQLSFISPPTPQPKTPSSSQPERLPI) is disordered. A Phosphoserine modification is found at Ser164. Residue Thr167 is modified to Phosphothreonine. Residues Lys244 and Lys252 each participate in a glycyl lysine isopeptide (Lys-Gly) (interchain with G-Cter in SUMO2) cross-link. The segment at 416–550 (NLVEHPAQLN…VHISVYRVRN (135 aa)) is mediates interaction with SART3. Ser619 carries the post-translational modification Phosphoserine.

In terms of assembly, component of the precatalytic spliceosome (spliceosome B complex). Component of the U4/U6-U5 tri-snRNP complex, a building block of the precatalytic spliceosome (spliceosome B complex). The U4/U6-U5 tri-snRNP complex is composed of the U4, U6 and U5 snRNAs and at least PRPF3, PRPF4, PRPF6, PRPF8, PRPF31, SNRNP200, TXNL4A, SNRNP40, SNRPB, SNRPD1, SNRPD2, SNRPD3, SNRPE, SNRPF, SNRPG, DDX23, CD2BP2, PPIH, SNU13, EFTUD2, SART1 and USP39, plus LSM2, LSM3, LSM4, LSM5, LSM6, LSM7 and LSM8. Interacts directly with PRPF4. Part of a heteromeric complex containing PPIH, PRPF3 and PRPF4 that is stable in the absence of RNA. Interacts with SART3; the interaction is direct and recruits the deubiquitinase USP4 to PRPF3. Interacts with PRPF19. Interacts ('Lys-63'-linked polyubiquitinated) with PRPF8 (via the MPN (JAB/Mov34) domain); may stabilize the U4/U6-U5 tri-snRNP complex. Interacts with ERCC6. In terms of processing, ubiquitinated. Undergoes 'Lys-63'-linked polyubiquitination by PRPF19 and deubiquitination by USP4. 'Lys-63'-linked ubiquitination increases the affinity for PRPF8 and may regulate the assembly of the U4/U6-U5 tri-snRNP complex. As to expression, highly expressed in retina, liver, kidney and blood. Detected at lower levels in heart and brain.

The protein localises to the nucleus. The protein resides in the nucleus speckle. Functionally, plays a role in pre-mRNA splicing as component of the U4/U6-U5 tri-snRNP complex that is involved in spliceosome assembly, and as component of the precatalytic spliceosome (spliceosome B complex). The chain is U4/U6 small nuclear ribonucleoprotein Prp3 (PRPF3) from Homo sapiens (Human).